The following is a 279-amino-acid chain: Inhibitor of growth protein 1 (279 aa).

A disordered region spans residues 115 to 206 (AHQDISDGTG…EASPADLPID (92 aa)). Lys135 participates in a covalent cross-link: Glycyl lysine isopeptide (Lys-Gly) (interchain with G-Cter in SUMO2). The segment covering 154–171 (RNNENRENASNNHDHDDI) has biased composition (basic and acidic residues). A compositionally biased stretch (basic residues) spans 179-191 (KKAKTSKKKKRSK). The PHD-type zinc finger occupies 210 to 259 (PTYCLCNQVSYGEMIGCDNDECPIEWFHFSCVGLNHKPKGKWYCPKCRGE). Zn(2+) contacts are provided by Cys213, Cys215, Cys226, Cys231, His237, Cys240, Cys253, and Cys256. The tract at residues 262–279 (KTMDKALEKSKKERAYNR) is PBR.

This sequence belongs to the ING family. As to quaternary structure, interacts with H3K4me3 and to a lesser extent with H3K4me2. Isoform 2 interacts with RSL1D1. In terms of tissue distribution, in the adult, widely expressed with highest levels in thymus and testis.

Its subcellular location is the nucleus. In terms of biological role, isoform 1 inhibits p53-dependent transcriptional activation and may function as an oncoprotein. Isoform 2 acts as a negative growth regulator by cooperating with p53 in transcriptional activation of p53-responsive genes and may act as a tumor suppressor. This Mus musculus (Mouse) protein is Inhibitor of growth protein 1 (Ing1).